The chain runs to 354 residues: Pyrimidine monooxygenase RutA (354 aa).

FMN contacts are provided by residues 49-50, Asn-115, Glu-124, 140-141, and Ser-189; these read IK and RY.

It belongs to the NtaA/SnaA/DszA monooxygenase family. RutA subfamily.

It catalyses the reaction uracil + FMNH2 + NADH + O2 = (Z)-3-ureidoacrylate + FMN + NAD(+) + H2O + H(+). The enzyme catalyses thymine + FMNH2 + NADH + O2 = (Z)-2-methylureidoacrylate + FMN + NAD(+) + H2O + H(+). Catalyzes the pyrimidine ring opening between N-3 and C-4 by an unusual flavin hydroperoxide-catalyzed mechanism, adding oxygen atoms in the process to yield ureidoacrylate peracid, that immediately reacts with FMN forming ureidoacrylate and FMN-N(5)-oxide. The FMN-N(5)-oxide reacts spontaneously with NADH to produce FMN. Requires the flavin reductase RutF to regenerate FMN in vivo. The protein is Pyrimidine monooxygenase RutA of Caulobacter sp. (strain K31).